The sequence spans 284 residues: Tropomyosin, smooth muscle/fibroblast CTM1 (284 aa).

The stretch at M1–L284 forms a coiled coil. The segment at A18–G38 is disordered.

Belongs to the tropomyosin family. In terms of assembly, homodimer. Predominantly expressed in body wall muscle and heart, low in intestine, ovary and larval tail muscle.

Functionally, the function of tropomyosin in smooth muscle and non-muscle cells is not clear. The polypeptide is Tropomyosin, smooth muscle/fibroblast CTM1 (CTM1) (Ciona intestinalis (Transparent sea squirt)).